The sequence spans 249 residues: Probable transcriptional regulatory protein ACIAD2052 (249 aa).

This sequence belongs to the TACO1 family.

The protein localises to the cytoplasm. This chain is Probable transcriptional regulatory protein ACIAD2052, found in Acinetobacter baylyi (strain ATCC 33305 / BD413 / ADP1).